Here is a 316-residue protein sequence, read N- to C-terminus: Golgi to ER traffic protein 2 (316 aa).

The interval 1 to 75 (MATELSDAEK…SDEEVEKSTK (75 aa)) is disordered. Residues 1–167 (MATELSDAEK…LKYYKFKVSK (167 aa)) lie on the Cytoplasmic side of the membrane. Over residues 7–19 (DAEKRKLLRERRQ) the composition is skewed to basic and acidic residues. Polar residues-rich tracts occupy residues 22–48 (FSNG…STSV) and 56–65 (PSGNKKSSNV). A helical transmembrane segment spans residues 168–187 (LKSYIILIKWALLAPYVYFI). Residues 188–209 (MHPNPTVLQASNLLSQIVERSN) lie on the Lumenal side of the membrane. The chain crosses the membrane as a helical span at residues 210–229 (FFSIFTGLEIVFISIYYQML). Residues 230–276 (KKLQRDNNVTATQNAGGILKYLTMIPEGILPIRNIQGKIGLALEYFD) are Cytoplasmic-facing. The helical transmembrane segment at 277–297 (VASMYVTDICFVLVLFGVMKY) threads the bilayer. Over 298 to 316 (YHSSFPISVPIEPPIAGIQ) the chain is Lumenal.

Belongs to the GET2 family. As to quaternary structure, component of the Golgi to ER traffic (GET) complex, which is composed of GET1, GET2 and GET3. Within the complex, GET1 and GET2 form a heterotetramer which is stabilized by phosphatidylinositol binding and which binds to the GET3 homodimer.

The protein localises to the endoplasmic reticulum membrane. Its subcellular location is the golgi apparatus membrane. In terms of biological role, required for the post-translational delivery of tail-anchored (TA) proteins to the endoplasmic reticulum. Together with GET1, acts as a membrane receptor for soluble GET3, which recognizes and selectively binds the transmembrane domain of TA proteins in the cytosol. The GET complex cooperates with the HDEL receptor ERD2 to mediate the ATP-dependent retrieval of resident ER proteins that contain a C-terminal H-D-E-L retention signal from the Golgi to the ER. The polypeptide is Golgi to ER traffic protein 2 (Kluyveromyces lactis (strain ATCC 8585 / CBS 2359 / DSM 70799 / NBRC 1267 / NRRL Y-1140 / WM37) (Yeast)).